Reading from the N-terminus, the 235-residue chain is NifU-like protein 2, chloroplastic (235 aa).

The N-terminal 16 residues, 1–16 (MQLLTLNPAAISRTPP), are a transit peptide targeting the chloroplast.

It belongs to the NifU family. As to quaternary structure, homodimer; disulfide-linked. [2Fe-2S] cluster serves as cofactor. In terms of tissue distribution, predominantly expressed in leaves and floral stalks. Ubiquitous (at protein level).

It localises to the plastid. It is found in the chloroplast stroma. In terms of biological role, molecular scaffold for [Fe-S] cluster assembly of chloroplastic iron-sulfur proteins. Required for biogenesis of ferredoxin, a major photosynthetic electron carrier containing [2Fe-2S] cluster. Required for the assembly of photosystem I complex. In Arabidopsis thaliana (Mouse-ear cress), this protein is NifU-like protein 2, chloroplastic (NIFU2).